A 308-amino-acid polypeptide reads, in one-letter code: D-alanine--D-alanine ligase (308 aa).

In terms of domain architecture, ATP-grasp spans 104–301; it reads KQIWQGSDLP…FDELCVAILE (198 aa). 130–185 serves as a coordination point for ATP; that stretch reads IAELGLPVIIKPVHEGSSVGMSKVEKAEDFAAAIEKATQHDAVVMAEKWITGREFT. 3 residues coordinate Mg(2+): D255, E268, and N270.

It belongs to the D-alanine--D-alanine ligase family. Mg(2+) serves as cofactor. It depends on Mn(2+) as a cofactor.

The protein resides in the cytoplasm. It carries out the reaction 2 D-alanine + ATP = D-alanyl-D-alanine + ADP + phosphate + H(+). Its pathway is cell wall biogenesis; peptidoglycan biosynthesis. Its function is as follows. Cell wall formation. The protein is D-alanine--D-alanine ligase of Acinetobacter baumannii (strain ACICU).